A 142-amino-acid chain; its full sequence is Cytidine deaminase (142 aa).

A CMP/dCMP-type deaminase domain is found at 9–139 (RQLEALKRAA…ELLPMAFGPS (131 aa)). A substrate-binding site is contributed by 50-52 (NVE). Cys61 contacts Zn(2+). Catalysis depends on Glu63, which acts as the Proton donor. 2 residues coordinate Zn(2+): Cys96 and Cys99.

The protein belongs to the cytidine and deoxycytidylate deaminase family. In terms of assembly, homodimer. Zn(2+) serves as cofactor.

The enzyme catalyses cytidine + H2O + H(+) = uridine + NH4(+). It carries out the reaction 2'-deoxycytidine + H2O + H(+) = 2'-deoxyuridine + NH4(+). In terms of biological role, this enzyme scavenges exogenous and endogenous cytidine and 2'-deoxycytidine for UMP synthesis. This chain is Cytidine deaminase (CDD1), found in Saccharomyces cerevisiae (strain ATCC 204508 / S288c) (Baker's yeast).